The chain runs to 235 residues: 7-cyano-7-deazaguanine synthase (235 aa).

13–23 lines the ATP pocket; the sequence is FSGGLDSTTCL. Zn(2+)-binding residues include C197, C207, C210, and C213.

This sequence belongs to the QueC family. Requires Zn(2+) as cofactor.

It catalyses the reaction 7-carboxy-7-deazaguanine + NH4(+) + ATP = 7-cyano-7-deazaguanine + ADP + phosphate + H2O + H(+). It functions in the pathway purine metabolism; 7-cyano-7-deazaguanine biosynthesis. Its function is as follows. Catalyzes the ATP-dependent conversion of 7-carboxy-7-deazaguanine (CDG) to 7-cyano-7-deazaguanine (preQ(0)). The chain is 7-cyano-7-deazaguanine synthase from Solidesulfovibrio magneticus (strain ATCC 700980 / DSM 13731 / RS-1) (Desulfovibrio magneticus).